The sequence spans 345 residues: Phosphoribosylformylglycinamidine cyclo-ligase (345 aa).

The protein belongs to the AIR synthase family.

It localises to the cytoplasm. The enzyme catalyses 2-formamido-N(1)-(5-O-phospho-beta-D-ribosyl)acetamidine + ATP = 5-amino-1-(5-phospho-beta-D-ribosyl)imidazole + ADP + phosphate + H(+). The protein operates within purine metabolism; IMP biosynthesis via de novo pathway; 5-amino-1-(5-phospho-D-ribosyl)imidazole from N(2)-formyl-N(1)-(5-phospho-D-ribosyl)glycinamide: step 2/2. This chain is Phosphoribosylformylglycinamidine cyclo-ligase, found in Histophilus somni (strain 129Pt) (Haemophilus somnus).